Reading from the N-terminus, the 85-residue chain is uncharacterized protein (85 aa).

This is an uncharacterized protein from Caenorhabditis elegans.